Consider the following 197-residue polypeptide: Peptide deformylase (197 aa).

Residues Cys106 and His148 each coordinate Fe cation. Glu149 is an active-site residue. His152 lines the Fe cation pocket.

It belongs to the polypeptide deformylase family. The cofactor is Fe(2+).

The catalysed reaction is N-terminal N-formyl-L-methionyl-[peptide] + H2O = N-terminal L-methionyl-[peptide] + formate. In terms of biological role, removes the formyl group from the N-terminal Met of newly synthesized proteins. Requires at least a dipeptide for an efficient rate of reaction. N-terminal L-methionine is a prerequisite for activity but the enzyme has broad specificity at other positions. This is Peptide deformylase from Mycobacterium ulcerans (strain Agy99).